Consider the following 80-residue polypeptide: Cell division activator CedA (80 aa).

This sequence belongs to the CedA family.

Activates the cell division inhibited by chromosomal DNA over-replication. The polypeptide is Cell division activator CedA (Escherichia coli O139:H28 (strain E24377A / ETEC)).